A 140-amino-acid polypeptide reads, in one-letter code: UPF0102 protein alr1796 (140 aa).

This sequence belongs to the UPF0102 family.

The polypeptide is UPF0102 protein alr1796 (Nostoc sp. (strain PCC 7120 / SAG 25.82 / UTEX 2576)).